A 735-amino-acid polypeptide reads, in one-letter code: Catalase-peroxidase (735 aa).

The disordered stretch occupies residues 1-31 (MENNTNPISGQGKCPFSGGAAKQSAGAGTRN). The segment covering 17–28 (SGGAAKQSAGAG) has biased composition (low complexity). Residues 103–226 (WHSAGTYRVA…LAAVQMGLIY (124 aa)) constitute a cross-link (tryptophyl-tyrosyl-methioninium (Trp-Tyr) (with M-252)). The active-site Proton acceptor is histidine 104. Positions 226–252 (YVNPEGPNGNPDPLASARDIRETFARM) form a cross-link, tryptophyl-tyrosyl-methioninium (Tyr-Met) (with W-103). Heme b is bound at residue histidine 267. The segment at 352–371 (KPKNGAGAGTVPDAHNSSKS) is disordered.

This sequence belongs to the peroxidase family. Peroxidase/catalase subfamily. In terms of assembly, homodimer or homotetramer. The cofactor is heme b. Post-translationally, formation of the three residue Trp-Tyr-Met cross-link is important for the catalase, but not the peroxidase activity of the enzyme.

It catalyses the reaction H2O2 + AH2 = A + 2 H2O. The enzyme catalyses 2 H2O2 = O2 + 2 H2O. In terms of biological role, bifunctional enzyme with both catalase and broad-spectrum peroxidase activity. This is Catalase-peroxidase from Flavobacterium psychrophilum (strain ATCC 49511 / DSM 21280 / CIP 103535 / JIP02/86).